A 383-amino-acid chain; its full sequence is Neuropeptide Y receptor type 1 (383 aa).

Over Met-1 to His-34 the chain is Extracellular. Asn-2, Asn-11, and Asn-17 each carry an N-linked (GlcNAc...) asparagine glycan. The chain crosses the membrane as a helical span at residues Leu-35 to Val-55. The Cytoplasmic portion of the chain corresponds to Ser-56–Leu-87. A helical membrane pass occupies residues Leu-88–Phe-108. At Gly-109 to Asn-116 the chain is on the extracellular side. Cys-113 and Cys-198 are oxidised to a cystine. The chain crosses the membrane as a helical span at residues Pro-117–Glu-137. Over Arg-138–His-154 the chain is Cytoplasmic. A helical transmembrane segment spans residues Ala-155–Ile-175. Residues Tyr-176–Tyr-211 lie on the Extracellular side of the membrane. A helical membrane pass occupies residues Thr-212–Phe-232. Residues Lys-233–Arg-260 are Cytoplasmic-facing. Residues Ile-261 to Ile-281 traverse the membrane as a helical segment. The Extracellular portion of the chain corresponds to Phe-282 to Asn-299. Residues Leu-300–Tyr-320 traverse the membrane as a helical segment. Topologically, residues Gly-321–Ile-383 are cytoplasmic. Cys-338 carries the S-palmitoyl cysteine lipid modification. A phosphoserine mark is found at Ser-368 and Ser-376.

This sequence belongs to the G-protein coupled receptor 1 family.

The protein resides in the cell membrane. Functionally, receptor for neuropeptide Y and peptide YY. In Cavia porcellus (Guinea pig), this protein is Neuropeptide Y receptor type 1 (NPY1R).